The chain runs to 149 residues: 3-dehydroquinate dehydratase (149 aa).

The active-site Proton acceptor is the Tyr-26. Substrate contacts are provided by Asn-77, His-83, and Asp-90. His-103 functions as the Proton donor in the catalytic mechanism. Residues 104-105 and Arg-114 contribute to the substrate site; that span reads LS.

It belongs to the type-II 3-dehydroquinase family. Homododecamer.

It catalyses the reaction 3-dehydroquinate = 3-dehydroshikimate + H2O. The protein operates within metabolic intermediate biosynthesis; chorismate biosynthesis; chorismate from D-erythrose 4-phosphate and phosphoenolpyruvate: step 3/7. Catalyzes a trans-dehydration via an enolate intermediate. The sequence is that of 3-dehydroquinate dehydratase from Psychromonas ingrahamii (strain DSM 17664 / CCUG 51855 / 37).